Consider the following 269-residue polypeptide: Tryptophan synthase alpha chain (269 aa).

Catalysis depends on proton acceptor residues E49 and D60.

It belongs to the TrpA family. As to quaternary structure, tetramer of two alpha and two beta chains.

It carries out the reaction (1S,2R)-1-C-(indol-3-yl)glycerol 3-phosphate + L-serine = D-glyceraldehyde 3-phosphate + L-tryptophan + H2O. Its pathway is amino-acid biosynthesis; L-tryptophan biosynthesis; L-tryptophan from chorismate: step 5/5. The alpha subunit is responsible for the aldol cleavage of indoleglycerol phosphate to indole and glyceraldehyde 3-phosphate. This chain is Tryptophan synthase alpha chain, found in Paramagnetospirillum magneticum (strain ATCC 700264 / AMB-1) (Magnetospirillum magneticum).